The following is a 128-amino-acid chain: Probable 4-amino-4-deoxy-L-arabinose-phosphoundecaprenol flippase subunit ArnF (128 aa).

Over 1-2 (MG) the chain is Cytoplasmic. A helical membrane pass occupies residues 3–23 (LIWGLFSVIIASVAQLSLGFA). At 24–35 (ASHLPPMTHLWD) the chain is on the periplasmic side. The helical transmembrane segment at 36–56 (FIAALLAFGLDARILLLGLLG) threads the bilayer. Topologically, residues 57–76 (YLLSVFCWYKTLHKLALSKA) are cytoplasmic. A helical transmembrane segment spans residues 77 to 97 (YALLSMSYVLVWIASMVLPGW). Residues 98–100 (EGT) are Periplasmic-facing. A helical transmembrane segment spans residues 101-121 (FSLKALLGVACIMSGLMLIFL). The Cytoplasmic segment spans residues 122-128 (PMTKQRY).

The protein belongs to the ArnF family. As to quaternary structure, heterodimer of ArnE and ArnF.

The protein localises to the cell inner membrane. Its pathway is bacterial outer membrane biogenesis; lipopolysaccharide biosynthesis. Its function is as follows. Translocates 4-amino-4-deoxy-L-arabinose-phosphoundecaprenol (alpha-L-Ara4N-phosphoundecaprenol) from the cytoplasmic to the periplasmic side of the inner membrane. The sequence is that of Probable 4-amino-4-deoxy-L-arabinose-phosphoundecaprenol flippase subunit ArnF from Escherichia coli O9:H4 (strain HS).